The chain runs to 80 residues: Toxin Acra I-2 (80 aa).

The first 22 residues, Met1–Gly22, serve as a signal peptide directing secretion. In terms of domain architecture, LCN-type CS-alpha/beta spans Val25 to Ile80. Cystine bridges form between Cys40/Cys63, Cys49/Cys68, and Cys53/Cys70.

As to expression, expressed by the venom gland.

Its subcellular location is the secreted. Functionally, probable neurotoxin that inhibits ion channels. Is toxic to mice. Is about 2.8% of the total protein in the venom. The chain is Toxin Acra I-2 from Androctonus crassicauda (Arabian fat-tailed scorpion).